A 123-amino-acid chain; its full sequence is Protein Wnt-7(I) (123 aa).

Residue Ser-1 is the site of O-palmitoleoyl serine; by PORCN attachment. Cysteines 89 and 104 form a disulfide. N-linked (GlcNAc...) asparagine glycosylation is present at Asn-90. A Microbody targeting signal motif is present at residues 121–123 (CKF).

Belongs to the Wnt family. Palmitoleoylation is required for efficient binding to frizzled receptors. Depalmitoleoylation leads to Wnt signaling pathway inhibition.

It localises to the secreted. It is found in the extracellular space. The protein localises to the extracellular matrix. Functionally, ligand for members of the frizzled family of seven transmembrane receptors. Probable developmental protein. May be a signaling molecule which affects the development of discrete regions of tissues. Is likely to signal over only few cell diameters. This chain is Protein Wnt-7(I) (WNT-7(I)), found in Eptatretus stoutii (Pacific hagfish).